The sequence spans 380 residues: Bifunctional enzyme IspD/IspF (380 aa).

The interval 1–224 (MTIPATYAAI…ERILGDAMDI (224 aa)) is 2-C-methyl-D-erythritol 4-phosphate cytidylyltransferase. The segment at 225-380 (RLGNGFDVHA…SIATATLVKG (156 aa)) is 2-C-methyl-D-erythritol 2,4-cyclodiphosphate synthase. Aspartate 231 and histidine 233 together coordinate a divalent metal cation. 4-CDP-2-C-methyl-D-erythritol 2-phosphate is bound by residues 231–233 (DVH) and 257–258 (HS). Histidine 265 contributes to the a divalent metal cation binding site. 4-CDP-2-C-methyl-D-erythritol 2-phosphate-binding positions include 279 to 281 (DIG), 355 to 358 (TTSE), phenylalanine 362, and arginine 365.

It in the N-terminal section; belongs to the IspD/TarI cytidylyltransferase family. IspD subfamily. In the C-terminal section; belongs to the IspF family. It depends on a divalent metal cation as a cofactor.

The catalysed reaction is 2-C-methyl-D-erythritol 4-phosphate + CTP + H(+) = 4-CDP-2-C-methyl-D-erythritol + diphosphate. The enzyme catalyses 4-CDP-2-C-methyl-D-erythritol 2-phosphate = 2-C-methyl-D-erythritol 2,4-cyclic diphosphate + CMP. The protein operates within isoprenoid biosynthesis; isopentenyl diphosphate biosynthesis via DXP pathway; isopentenyl diphosphate from 1-deoxy-D-xylulose 5-phosphate: step 2/6. It functions in the pathway isoprenoid biosynthesis; isopentenyl diphosphate biosynthesis via DXP pathway; isopentenyl diphosphate from 1-deoxy-D-xylulose 5-phosphate: step 4/6. Functionally, bifunctional enzyme that catalyzes the formation of 4-diphosphocytidyl-2-C-methyl-D-erythritol from CTP and 2-C-methyl-D-erythritol 4-phosphate (MEP) (IspD), and catalyzes the conversion of 4-diphosphocytidyl-2-C-methyl-D-erythritol 2-phosphate (CDP-ME2P) to 2-C-methyl-D-erythritol 2,4-cyclodiphosphate (ME-CPP) with a corresponding release of cytidine 5-monophosphate (CMP) (IspF). The protein is Bifunctional enzyme IspD/IspF of Paracoccus denitrificans (strain Pd 1222).